The chain runs to 1512 residues: ATP-dependent permease YOR1 (1512 aa).

The segment at 1 to 68 is disordered; the sequence is MSPLLPTHWG…KGMKETEDGG (68 aa). Residues 13–29 are compositionally biased toward polar residues; it reads APQNEPTLPSPSHSVST. A compositionally biased stretch (basic and acidic residues) spans 31–65; the sequence is VGDEEKLRRSEGSDGEDRINLDSNKYDVKGMKETE. 5 helical membrane-spanning segments follow: residues 229 to 249, 288 to 308, 363 to 385, 475 to 495, and 507 to 527; these read ASLAMSLLDVFGWFFMSAGFI, GPGIGAAIGLLLLLICSSLGM, FAAGFSHMLWTAPVQMIVIIIIL, GMTAIAMSLPILAAILSFITY, and IFTVITLFNLMRMPLMMWPMT. In terms of domain architecture, ABC transmembrane type-1 1 spans 246-533; that stretch reads AGFIKVFGDT…WPMTLSSTAD (288 aa). Positions 594–656 are disordered; it reads VLNGGKPGGP…SAPGIDEEIS (63 aa). Residues 619-643 are compositionally biased toward low complexity; that stretch reads AEEIQAETAAGQPGAGEASAEGQGQ. The region spanning 651–871 is the ABC transporter 1 domain; it reads IDEEISEKKE…NGAFAKLIKE (221 aa). 683–690 provides a ligand contact to ATP; sequence GAIGSGKS. 4 consecutive transmembrane segments (helical) span residues 937–957, 974–994, 1067–1087, and 1167–1187; these read GVFMLPLLFFCIVVAQSFYVI, NGFYMGIYAGLGVGLAIALFF, VILLAIIEPYFLIAMAVVSLL, and FLGSLLSFSVAIIVVCSSSVS. The region spanning 943–1217 is the ABC transmembrane type-1 2 domain; the sequence is LLFFCIVVAQ…LVRQIAEVEN (275 aa). Positions 1255 to 1496 constitute an ABC transporter 2 domain; it reads IEFKDVRMRY…GGIFTEMCSK (242 aa). 1289-1296 is an ATP binding site; sequence GRTGAGKS.

It belongs to the ABC transporter superfamily. ABCC family. Conjugate transporter (TC 3.A.1.208) subfamily.

The protein localises to the extracellular vesicle membrane. It localises to the secreted. Functionally, transmembrane transporter. May play a role in the packaging or formation of extracellular vesicles (EVs), and in the export of virulence factors from EVs. Required for efficient non-lytic exocytosis from host macrophages, the process by which the yeast escapes host macrophages with both host cell and pathogen remaining viable. In Cryptococcus neoformans var. grubii serotype A (strain H99 / ATCC 208821 / CBS 10515 / FGSC 9487) (Filobasidiella neoformans var. grubii), this protein is ATP-dependent permease YOR1.